We begin with the raw amino-acid sequence, 94 residues long: Large ribosomal subunit protein bL25 (94 aa).

The protein belongs to the bacterial ribosomal protein bL25 family. Part of the 50S ribosomal subunit; part of the 5S rRNA/L5/L18/L25 subcomplex. Contacts the 5S rRNA. Binds to the 5S rRNA independently of L5 and L18.

In terms of biological role, this is one of the proteins that binds to the 5S RNA in the ribosome where it forms part of the central protuberance. The chain is Large ribosomal subunit protein bL25 from Photorhabdus laumondii subsp. laumondii (strain DSM 15139 / CIP 105565 / TT01) (Photorhabdus luminescens subsp. laumondii).